A 98-amino-acid polypeptide reads, in one-letter code: UPF0473 protein GTNG_2486 (98 aa).

It belongs to the UPF0473 family.

This Geobacillus thermodenitrificans (strain NG80-2) protein is UPF0473 protein GTNG_2486.